The sequence spans 77 residues: ATP synthase subunit 9, mitochondrial (77 aa).

2 consecutive transmembrane segments (helical) span residues 8 to 28 and 45 to 72; these read MGAG…GNVL and LFGY…LISF.

The protein belongs to the ATPase C chain family. F-type ATPases have 2 components, CF(1) - the catalytic core - and CF(0) - the membrane proton channel. CF(1) has five subunits: alpha(3), beta(3), gamma(1), delta(1), epsilon(1). CF(0) has three main subunits: a, b and c.

The protein localises to the mitochondrion membrane. This protein is one of the chains of the nonenzymatic membrane component (F0) of mitochondrial ATPase. The protein is ATP synthase subunit 9, mitochondrial (ATP9) of Petunia sp. (Petunia).